A 304-amino-acid chain; its full sequence is Protease HtpX homolog (304 aa).

2 helical membrane passes run 14–34 (VFII…IGII) and 39–59 (YLNG…IMVM). Zn(2+) is bound at residue His144. Glu145 is an active-site residue. Zn(2+) is bound at residue His148. 2 consecutive transmembrane segments (helical) span residues 159 to 179 (IAIA…RMIF) and 202 to 222 (AIIY…ATAI). Glu231 contributes to the Zn(2+) binding site.

It belongs to the peptidase M48B family. Requires Zn(2+) as cofactor.

The protein resides in the cell membrane. This chain is Protease HtpX homolog, found in Listeria monocytogenes serotype 4a (strain HCC23).